Consider the following 37-residue polypeptide: uncharacterized protein (37 aa).

Residues 13–33 (TFLTIIVLLMIVFGIAIVALL) traverse the membrane as a helical segment.

The protein localises to the host membrane. This is an uncharacterized protein from Acidianus convivator (ABV).